A 223-amino-acid chain; its full sequence is Killer cell lectin-like receptor subfamily B member 1B allele B (223 aa).

At 1-43 the chain is on the cytoplasmic side; that stretch reads MDSTTLVYADLNLARIQEPKHDSPPSLSPDTCRCPRWHRLALK. An ITIM motif motif is present at residues 6–11; that stretch reads LVYADL. The short motif at 32–35 is the LCK-binding motif element; sequence CRCP. Residues 44-64 traverse the membrane as a helical; Signal-anchor for type II membrane protein segment; that stretch reads FGCAGLILLVLVVIGLCVLVL. Residues 65 to 223 lie on the Extracellular side of the membrane; that stretch reads SVQKSSVQKI…LNHETPCNDS (159 aa). Positions 101-211 constitute a C-type lectin domain; sequence HRDKCFHVSQ…CSSDNRWICQ (111 aa). 2 disulfides stabilise this stretch: cysteine 122-cysteine 210 and cysteine 189-cysteine 202.

Homodimer; disulfide-linked. Interacts with tyrosine kinase LCK. Binds PTPN6/SHP-1 in a phosphorylation-dependent manner. Expressed in NK cells and a subset of T-cells.

The protein localises to the membrane. In terms of biological role, receptor for CLEC2D/OCIL. Ligand-binding contributes to inhibition of cytotoxic natural killer (NK) cells. May mediate MHC class I-independent 'missing-self' recognition of allografts, tumor cells and virus-infected cells. The chain is Killer cell lectin-like receptor subfamily B member 1B allele B (Klrb1b) from Mus musculus (Mouse).